A 282-amino-acid polypeptide reads, in one-letter code: Deoxyribonuclease-1 (282 aa).

An N-terminal signal peptide occupies residues 1 to 20 (MARLVLELLAAALLLRVAAT). Asparagine 38 carries N-linked (GlcNAc...) asparagine glycosylation. The active site involves glutamate 98. Cysteine 121 and cysteine 124 are disulfide-bonded. Histidine 154 is an active-site residue. Cysteine 193 and cysteine 229 are disulfide-bonded.

The protein belongs to the DNase I family. Requires Ca(2+) as cofactor. Mg(2+) is required as a cofactor. Post-translationally, N-glycosylated.

Its subcellular location is the secreted. The protein localises to the zymogen granule. It localises to the nucleus envelope. It catalyses the reaction Endonucleolytic cleavage to 5'-phosphodinucleotide and 5'-phosphooligonucleotide end-products.. Serum endocuclease secreted into body fluids by a wide variety of exocrine and endocrine organs. Expressed by non-hematopoietic tissues and preferentially cleaves protein-free DNA. Among other functions, seems to be involved in cell death by apoptosis. Binds specifically to G-actin and blocks actin polymerization. The protein is Deoxyribonuclease-1 (DNASE1) of Gallus gallus (Chicken).